The following is a 375-amino-acid chain: Heat shock protein 42 (375 aa).

Disordered regions lie at residues 21 to 59 (TGQRGQQGYPRQPQRPQRYHPHYGQVHVGGHHPRHHPLY), 81 to 127 (SPEY…YYHC), 154 to 238 (PYEG…ETRM), and 347 to 375 (PKPKKRIAIEEIPDEELEFEENPNPTVEN). Over residues 22-48 (GQRGQQGYPRQPQRPQRYHPHYGQVHV) the composition is skewed to low complexity. Residues 49–58 (GGHHPRHHPL) show a composition bias toward basic residues. Composition is skewed to acidic residues over residues 85–101 (GYDDEDGEEEDQDEDMV) and 158–168 (TEPEIEANTEQ). The segment covering 169 to 197 (EGEKGEEKDKKDKSEAPKEEAGETNKEKP) has biased composition (basic and acidic residues). 5 positions are modified to phosphoserine: Ser-182, Ser-213, Ser-214, Ser-215, and Ser-223. Residues 237-356 (RMDLPFSPEV…PKPKKRIAIE (120 aa)) form the sHSP domain. The span at 357 to 367 (EIPDEELEFEE) shows a compositional bias: acidic residues.

Belongs to the small heat shock protein (HSP20) family. In terms of assembly, forms oligomeric complexes. Interacts with itself.

The sequence is that of Heat shock protein 42 (HSP42) from Saccharomyces cerevisiae (strain ATCC 204508 / S288c) (Baker's yeast).